Reading from the N-terminus, the 465-residue chain is ATP synthase subunit beta (465 aa).

152–159 (GGAGVGKT) contacts ATP.

This sequence belongs to the ATPase alpha/beta chains family. In terms of assembly, F-type ATPases have 2 components, CF(1) - the catalytic core - and CF(0) - the membrane proton channel. CF(1) has five subunits: alpha(3), beta(3), gamma(1), delta(1), epsilon(1). CF(0) has three main subunits: a(1), b(2) and c(9-12). The alpha and beta chains form an alternating ring which encloses part of the gamma chain. CF(1) is attached to CF(0) by a central stalk formed by the gamma and epsilon chains, while a peripheral stalk is formed by the delta and b chains.

Its subcellular location is the cell membrane. The catalysed reaction is ATP + H2O + 4 H(+)(in) = ADP + phosphate + 5 H(+)(out). In terms of biological role, produces ATP from ADP in the presence of a proton gradient across the membrane. The catalytic sites are hosted primarily by the beta subunits. This is ATP synthase subunit beta from Ruminiclostridium cellulolyticum (strain ATCC 35319 / DSM 5812 / JCM 6584 / H10) (Clostridium cellulolyticum).